The primary structure comprises 122 residues: Large ribosomal subunit protein eL8 (122 aa).

The protein belongs to the eukaryotic ribosomal protein eL8 family. In terms of assembly, part of the 50S ribosomal subunit. Probably part of the RNase P complex.

The protein resides in the cytoplasm. Multifunctional RNA-binding protein that recognizes the K-turn motif in ribosomal RNA, the RNA component of RNase P, box H/ACA, box C/D and box C'/D' sRNAs. The chain is Large ribosomal subunit protein eL8 from Methanothrix thermoacetophila (strain DSM 6194 / JCM 14653 / NBRC 101360 / PT) (Methanosaeta thermophila).